Consider the following 130-residue polypeptide: General stress protein 13 (130 aa).

An S1 motif domain is found at 8–77 (GSVYTGKVTG…EKGKISLSIR (70 aa)). The tract at residues 76–109 (IRATQAAPEKKESKPRKPKAAQVSEEASTPQGFN) is disordered. Polar residues predominate over residues 100–109 (EEASTPQGFN).

In terms of assembly, found in association with the 30S subunit of the ribosome.

Its subcellular location is the cytoplasm. This chain is General stress protein 13 (yugI), found in Bacillus subtilis (strain 168).